The chain runs to 1268 residues: Protein transport protein Sec24B (1268 aa).

Composition is skewed to low complexity over residues 1 to 14 and 21 to 48; these read MSAPAGSSHPAASA and GGAAVSGAAAPAGPGAGPAPHQQNGPAQ. Disordered regions lie at residues 1–71, 216–263, 303–345, and 362–451; these read MSAP…SGHY, APTV…LTWS, QNVQ…SVTQ, and NNQA…VVPQ. The residue at position 2 (S2) is an N-acetylserine. Position 55 is a phosphoserine (S55). Over residues 225 to 234 the composition is skewed to polar residues; it reads NSFSGQNTAI. 3 stretches are compositionally biased toward low complexity: residues 245-255, 311-332, and 365-375; these read SQQHHQQQSLS, SPVVSTVLSGSSGSSSTRTPPT, and ASSAPTPLSST. T329 is modified (phosphothreonine). Acidic residues predominate over residues 376–389; sequence SDDEEEEEEDEEAG. Residues 426–450 are compositionally biased toward pro residues; that stretch reads APDPAPEPDPASAPAPASAPAPVVP. Zn(2+)-binding residues include C605, C608, C626, and C629. Residues 605–629 are zinc finger-like; the sequence is CRSCRTYINPFVSFIDQRRWKCNLC. A Gelsolin-like repeat occupies 1141–1213; the sequence is PQPPLQKLSA…TLSSERARSF (73 aa). At S1224 the chain carries Phosphoserine.

This sequence belongs to the SEC23/SEC24 family. SEC24 subfamily. As to quaternary structure, COPII is composed of at least five proteins: the Sec23/24 complex, the Sec13/31 complex and SAR1. Interacts with STING1; promoting STING1 translocation to COPII vesicles in a STEEP1-dependent manner. Interacts with RNF139. Interacts with TMED2 and TMED10. Interacts with CNIH4.

Its subcellular location is the cytoplasmic vesicle. The protein localises to the COPII-coated vesicle membrane. It localises to the endoplasmic reticulum membrane. It is found in the cytoplasm. The protein resides in the cytosol. Its function is as follows. Component of the coat protein complex II (COPII) which promotes the formation of transport vesicles from the endoplasmic reticulum (ER). The coat has two main functions, the physical deformation of the endoplasmic reticulum membrane into vesicles and the selection of cargo molecules for their transport to the Golgi complex. Plays a central role in cargo selection within the COPII complex and together with SEC24A may have a different specificity compared to SEC24C and SEC24D. May package preferentially cargos with cytoplasmic DxE or LxxLE motifs and may also recognize conformational epitopes. The sequence is that of Protein transport protein Sec24B from Homo sapiens (Human).